Here is a 196-residue protein sequence, read N- to C-terminus: Acyl-homoserine-lactone synthase (196 aa).

The protein belongs to the autoinducer synthase family.

It carries out the reaction a fatty acyl-[ACP] + S-adenosyl-L-methionine = an N-acyl-L-homoserine lactone + S-methyl-5'-thioadenosine + holo-[ACP] + H(+). In terms of biological role, required for the synthesis of a yet unknown N-aceyl-homoserine lactone (N-aceyl-HSL), an autoinducer molecule which binds to PhzR and thus regulates phenazine production. The protein is Acyl-homoserine-lactone synthase (phzI) of Pseudomonas chlororaphis (Pseudomonas aureofaciens).